The following is a 288-amino-acid chain: Undecaprenyl-diphosphatase (288 aa).

Transmembrane regions (helical) follow at residues 25 to 45, 53 to 73, 93 to 113, 121 to 141, 171 to 191, 196 to 216, 231 to 251, and 263 to 283; these read GITE…NEFL, FIDM…MVIY, WKLW…GLLL, LSNF…FIWI, VLSI…GIIV, SVAA…YSGL, GQAA…LFVI, and FTVF…YGAV.

It belongs to the UppP family.

The protein localises to the cell membrane. It catalyses the reaction di-trans,octa-cis-undecaprenyl diphosphate + H2O = di-trans,octa-cis-undecaprenyl phosphate + phosphate + H(+). Catalyzes the dephosphorylation of undecaprenyl diphosphate (UPP). Confers resistance to bacitracin. In Streptococcus thermophilus (strain CNRZ 1066), this protein is Undecaprenyl-diphosphatase.